A 226-amino-acid polypeptide reads, in one-letter code: Late protein I226R (226 aa).

An N-terminal signal peptide occupies residues 1-16 (MKMETFLVCLFHNAAG). Residue Asn-164 is glycosylated (N-linked (GlcNAc...) asparagine; by host).

This sequence belongs to the asfivirus I226R family.

Its function is as follows. Plays a role in the inhibition of host NF-kappa-B and IRF3 signaling pathways. Mechanistically, promotes the degradation of host IKBKG through enhancing its ubiquitination leading to inhibition of both pathways. This is Late protein I226R from African swine fever virus (isolate Pig/Kenya/KEN-50/1950) (ASFV).